Consider the following 361-residue polypeptide: Phosphoserine aminotransferase (361 aa).

R43 serves as a coordination point for L-glutamate. Pyridoxal 5'-phosphate is bound by residues 77-78 (AS), W103, T153, D173, and Q196. Position 197 is an N6-(pyridoxal phosphate)lysine (K197). Residue 238 to 239 (NT) participates in pyridoxal 5'-phosphate binding.

It belongs to the class-V pyridoxal-phosphate-dependent aminotransferase family. SerC subfamily. Homodimer. It depends on pyridoxal 5'-phosphate as a cofactor.

Its subcellular location is the cytoplasm. It carries out the reaction O-phospho-L-serine + 2-oxoglutarate = 3-phosphooxypyruvate + L-glutamate. It catalyses the reaction 4-(phosphooxy)-L-threonine + 2-oxoglutarate = (R)-3-hydroxy-2-oxo-4-phosphooxybutanoate + L-glutamate. The protein operates within amino-acid biosynthesis; L-serine biosynthesis; L-serine from 3-phospho-D-glycerate: step 2/3. Its pathway is cofactor biosynthesis; pyridoxine 5'-phosphate biosynthesis; pyridoxine 5'-phosphate from D-erythrose 4-phosphate: step 3/5. Its function is as follows. Catalyzes the reversible conversion of 3-phosphohydroxypyruvate to phosphoserine and of 3-hydroxy-2-oxo-4-phosphonooxybutanoate to phosphohydroxythreonine. The sequence is that of Phosphoserine aminotransferase from Pseudomonas paraeruginosa (strain DSM 24068 / PA7) (Pseudomonas aeruginosa (strain PA7)).